A 1357-amino-acid chain; its full sequence is Mediator of RNA polymerase II transcription subunit 13 (1357 aa).

2 disordered regions span residues 356 to 391 (SCNY…GNGF) and 420 to 487 (DLWN…HRKE). Residues 435–451 (INPTSQQGDSARITSGS) are compositionally biased toward polar residues.

This sequence belongs to the Mediator complex subunit 13 family. In terms of assembly, component of the SRB8-11 complex, which itself associates with the Mediator complex.

It is found in the nucleus. Component of the SRB8-11 complex. The SRB8-11 complex is a regulatory module of the Mediator complex which is itself involved in regulation of basal and activated RNA polymerase II-dependent transcription. The SRB8-11 complex may be involved in the transcriptional repression of a subset of genes regulated by Mediator. It may inhibit the association of the Mediator complex with RNA polymerase II to form the holoenzyme complex. The sequence is that of Mediator of RNA polymerase II transcription subunit 13 (SSN2) from Eremothecium gossypii (strain ATCC 10895 / CBS 109.51 / FGSC 9923 / NRRL Y-1056) (Yeast).